Reading from the N-terminus, the 291-residue chain is HTH-type transcriptional activator AmpR (291 aa).

In terms of domain architecture, HTH lysR-type spans 6–63 (IPLNSLRAFEAAARHLSFTRAAIELNVTHSAISQHVKSLEQQLNCQLFVRGSRGLMLT). A DNA-binding region (H-T-H motif) is located at residues 23 to 42 (FTRAAIELNVTHSAISQHVK).

The protein belongs to the LysR transcriptional regulatory family.

It localises to the cytoplasm. Its function is as follows. Regulates the expression of the beta-lactamase gene. Represses cephalosporinase (AmpC) in the presence of beta-lactams and induces it in the absence of them. In Citrobacter freundii, this protein is HTH-type transcriptional activator AmpR (ampR).